A 102-amino-acid chain; its full sequence is Large ribosomal subunit protein uL24 (102 aa).

The protein belongs to the universal ribosomal protein uL24 family. Part of the 50S ribosomal subunit.

In terms of biological role, one of two assembly initiator proteins, it binds directly to the 5'-end of the 23S rRNA, where it nucleates assembly of the 50S subunit. Its function is as follows. One of the proteins that surrounds the polypeptide exit tunnel on the outside of the subunit. The chain is Large ribosomal subunit protein uL24 from Polynucleobacter asymbioticus (strain DSM 18221 / CIP 109841 / QLW-P1DMWA-1) (Polynucleobacter necessarius subsp. asymbioticus).